The primary structure comprises 524 residues: L-tyrosine:2-oxoglutarate aminotransferase atrD (524 aa).

This sequence belongs to the class-I pyridoxal-phosphate-dependent aminotransferase family. Pyridoxal 5'-phosphate is required as a cofactor.

The catalysed reaction is L-tyrosine + 2-oxoglutarate = 3-(4-hydroxyphenyl)pyruvate + L-glutamate. It participates in secondary metabolite biosynthesis. The L-tyrosine:2-oxoglutarate aminotransferase atrD and the atromentin synthetase atrA catalyze consecutive steps to turn over L-tyrosine into atromentin, which represents the generic precursor molecule for the entire terphenylquinone and pulvinic acid family of pigments, which are widely distributed secondary metabolites in homobasidiomycetes. The first step is catalyzed by atrD which converts L-tyrosine in to 4-hydroxyphenylpyruvate (4-HPP). Adenylation of two 4-HPP monomers by the atrA adenylation (A) domain, ester bond formation between monomers and atrA, and symmetric C-C-bond formation between two monomers by atrA leads to atromentin. This Tapinella panuoides (Oyster rollrim mushroom) protein is L-tyrosine:2-oxoglutarate aminotransferase atrD.